Here is a 459-residue protein sequence, read N- to C-terminus: MKDIKTYDNKNILVLGLGKSGFAVSELLLKLGANLTLNDKADLDKNEKAQELKAKGVRVIGGYHPVDLLEEEHFDYLVKNPGIPYENPMVKKAEELDIPIITEPEVALSCSDAPYVCITGSNGKTTTVMLTQRILDHHLQKTGHHAYAVGNIGVPISEVVPKATKDDILVVEISSFQLLGVTDIKPKVAAIVDIYNNVHLDYHKTFENYVDAKLNVTRTQNSDDYFIANFDQKDILAKEKEVSPAKMQTFSETDHNADYFIGDEYLESQDEKIMKIADIKLPGVHNLQNSLVAIAIAKLMGADNEDIAAVLSTFTGAKHRLQYVTTLDGRKIYNDSKSTNIEAATVAIPAFKEPEVLIAGGLDRGFTFDDLVPLFKKHVKSIVLYGETKYLLADAARKAGIKEIVIVNTLQEAVPRAYELTEPGDVILFSPACASWDQFRTFEERGDYFVRFVEELKTK.

Position 120-126 (120-126 (GSNGKTT)) interacts with ATP.

It belongs to the MurCDEF family.

Its subcellular location is the cytoplasm. It catalyses the reaction UDP-N-acetyl-alpha-D-muramoyl-L-alanine + D-glutamate + ATP = UDP-N-acetyl-alpha-D-muramoyl-L-alanyl-D-glutamate + ADP + phosphate + H(+). It participates in cell wall biogenesis; peptidoglycan biosynthesis. Cell wall formation. Catalyzes the addition of glutamate to the nucleotide precursor UDP-N-acetylmuramoyl-L-alanine (UMA). In Lactobacillus acidophilus (strain ATCC 700396 / NCK56 / N2 / NCFM), this protein is UDP-N-acetylmuramoylalanine--D-glutamate ligase.